A 605-amino-acid polypeptide reads, in one-letter code: Isocitrate dehydrogenase kinase/phosphatase (605 aa).

ATP contacts are provided by residues 327–333 (APGIKGL) and K348. Residue D383 is part of the active site.

It belongs to the AceK family.

It localises to the cytoplasm. It catalyses the reaction L-seryl-[isocitrate dehydrogenase] + ATP = O-phospho-L-seryl-[isocitrate dehydrogenase] + ADP + H(+). Bifunctional enzyme which can phosphorylate or dephosphorylate isocitrate dehydrogenase (IDH) on a specific serine residue. This is a regulatory mechanism which enables bacteria to bypass the Krebs cycle via the glyoxylate shunt in response to the source of carbon. When bacteria are grown on glucose, IDH is fully active and unphosphorylated, but when grown on acetate or ethanol, the activity of IDH declines drastically concomitant with its phosphorylation. The polypeptide is Isocitrate dehydrogenase kinase/phosphatase (Burkholderia orbicola (strain AU 1054)).